Reading from the N-terminus, the 164-residue chain is Transcription antitermination protein NusB (164 aa).

It belongs to the NusB family.

In terms of biological role, involved in transcription antitermination. Required for transcription of ribosomal RNA (rRNA) genes. Binds specifically to the boxA antiterminator sequence of the ribosomal RNA (rrn) operons. The protein is Transcription antitermination protein NusB of Chlamydia muridarum (strain MoPn / Nigg).